The primary structure comprises 120 residues: ATP-dependent Clp protease adapter protein ClpS (120 aa).

The interval methionine 1–aspartate 20 is disordered.

It belongs to the ClpS family. Binds to the N-terminal domain of the chaperone ClpA.

Its function is as follows. Involved in the modulation of the specificity of the ClpAP-mediated ATP-dependent protein degradation. In Albidiferax ferrireducens (strain ATCC BAA-621 / DSM 15236 / T118) (Rhodoferax ferrireducens), this protein is ATP-dependent Clp protease adapter protein ClpS.